The primary structure comprises 73 residues: Conotoxin im23b (73 aa).

Residues 1-22 (MIMRMTLTLFVLVVMTAASASG) form the signal peptide. Positions 23–28 (DALTEA) are excised as a propeptide. 3 disulfides stabilise this stretch: Cys-34-Cys-41, Cys-45-Cys-55, and Cys-56-Cys-71.

This sequence belongs to the conotoxin K superfamily. Expressed by the venom duct.

The protein resides in the secreted. Its function is as follows. Neurotoxin that induces excitatory symptoms in mice following intracranial administration. No symptoms are observed after intraperitoneal and intravenous (tail vein) injections. The sequence is that of Conotoxin im23b from Conus imperialis (Imperial cone).